Reading from the N-terminus, the 609-residue chain is Putative transcriptional regulatory protein y4pA (609 aa).

In terms of domain architecture, Sigma-54 factor interaction spans 313–533; the sequence is IVGRSPSIQQ…LRSVLETAAI (221 aa). 395 to 404 contributes to the ATP binding site; that stretch reads HPKATLLIES. A DNA-binding region (H-T-H motif) is located at residues 578 to 597; that stretch reads RGEAARYLGISRKTLYNKMR.

Its function is as follows. Probable transcriptional regulator that acts in conjunction with sigma-54. The polypeptide is Putative transcriptional regulatory protein y4pA (Sinorhizobium fredii (strain NBRC 101917 / NGR234)).